The chain runs to 319 residues: Lipoyl synthase (319 aa).

[4Fe-4S] cluster contacts are provided by Cys66, Cys71, Cys77, Cys92, Cys96, Cys99, and Ser305. A Radical SAM core domain is found at 78-294 (FNRGTATFMI…KKEALSIGFT (217 aa)).

This sequence belongs to the radical SAM superfamily. Lipoyl synthase family. [4Fe-4S] cluster is required as a cofactor.

It localises to the cytoplasm. It catalyses the reaction [[Fe-S] cluster scaffold protein carrying a second [4Fe-4S](2+) cluster] + N(6)-octanoyl-L-lysyl-[protein] + 2 oxidized [2Fe-2S]-[ferredoxin] + 2 S-adenosyl-L-methionine + 4 H(+) = [[Fe-S] cluster scaffold protein] + N(6)-[(R)-dihydrolipoyl]-L-lysyl-[protein] + 4 Fe(3+) + 2 hydrogen sulfide + 2 5'-deoxyadenosine + 2 L-methionine + 2 reduced [2Fe-2S]-[ferredoxin]. It functions in the pathway protein modification; protein lipoylation via endogenous pathway; protein N(6)-(lipoyl)lysine from octanoyl-[acyl-carrier-protein]: step 2/2. Functionally, catalyzes the radical-mediated insertion of two sulfur atoms into the C-6 and C-8 positions of the octanoyl moiety bound to the lipoyl domains of lipoate-dependent enzymes, thereby converting the octanoylated domains into lipoylated derivatives. This Buchnera aphidicola subsp. Schizaphis graminum (strain Sg) protein is Lipoyl synthase.